We begin with the raw amino-acid sequence, 427 residues long: Peptidase B (427 aa).

Positions 195 and 200 each coordinate Mn(2+). Residue K207 is part of the active site. The Mn(2+) site is built by D218, D277, and E279. Residue R281 is part of the active site.

The protein belongs to the peptidase M17 family. As to quaternary structure, homohexamer. Requires Mn(2+) as cofactor.

It is found in the cytoplasm. It catalyses the reaction Release of an N-terminal amino acid, Xaa, from a peptide or arylamide. Xaa is preferably Glu or Asp but may be other amino acids, including Leu, Met, His, Cys and Gln.. Its function is as follows. Probably plays an important role in intracellular peptide degradation. The sequence is that of Peptidase B from Escherichia fergusonii (strain ATCC 35469 / DSM 13698 / CCUG 18766 / IAM 14443 / JCM 21226 / LMG 7866 / NBRC 102419 / NCTC 12128 / CDC 0568-73).